A 377-amino-acid polypeptide reads, in one-letter code: Putative glutamate--cysteine ligase 2 (377 aa).

Belongs to the glutamate--cysteine ligase type 2 family. YbdK subfamily.

It carries out the reaction L-cysteine + L-glutamate + ATP = gamma-L-glutamyl-L-cysteine + ADP + phosphate + H(+). ATP-dependent carboxylate-amine ligase which exhibits weak glutamate--cysteine ligase activity. In Pseudomonas aeruginosa (strain LESB58), this protein is Putative glutamate--cysteine ligase 2.